The chain runs to 261 residues: uncharacterized protein (261 aa).

Residues I33, K60, D78, and N105 each contribute to the NADP(+) site. The active-site Proton donor is the S157. NADP(+) contacts are provided by Y172, K176, and T206. The Proton acceptor role is filled by Y172. K176 (lowers pKa of active site Tyr) is an active-site residue.

This sequence belongs to the short-chain dehydrogenases/reductases (SDR) family.

The protein resides in the cytoplasm. It localises to the nucleus. This is an uncharacterized protein from Schizosaccharomyces pombe (strain 972 / ATCC 24843) (Fission yeast).